An 86-amino-acid chain; its full sequence is MAHKKGSGSTRNGRDSNAQRLGVKKYGGEYVIAGNILIRQRGTNVKAGFNVGIGKDNTLYSLINGEVKFERFDKKRKKISVYPCLD.

The tract at residues 1–20 (MAHKKGSGSTRNGRDSNAQR) is disordered. Polar residues predominate over residues 7–19 (SGSTRNGRDSNAQ).

This sequence belongs to the bacterial ribosomal protein bL27 family.

The protein resides in the plastid. The protein localises to the chloroplast. This Guillardia theta (Cryptophyte) protein is Large ribosomal subunit protein bL27c (rpl27).